Here is a 428-residue protein sequence, read N- to C-terminus: Serine--tRNA ligase (428 aa).

Residue 231-233 participates in L-serine binding; that stretch reads TAE. 262-264 lines the ATP pocket; sequence RAE. Glu-285 lines the L-serine pocket. 349–352 lines the ATP pocket; sequence EISS. Ser-385 is an L-serine binding site.

This sequence belongs to the class-II aminoacyl-tRNA synthetase family. Type-1 seryl-tRNA synthetase subfamily. As to quaternary structure, homodimer. The tRNA molecule binds across the dimer.

It is found in the cytoplasm. It carries out the reaction tRNA(Ser) + L-serine + ATP = L-seryl-tRNA(Ser) + AMP + diphosphate + H(+). The enzyme catalyses tRNA(Sec) + L-serine + ATP = L-seryl-tRNA(Sec) + AMP + diphosphate + H(+). It functions in the pathway aminoacyl-tRNA biosynthesis; selenocysteinyl-tRNA(Sec) biosynthesis; L-seryl-tRNA(Sec) from L-serine and tRNA(Sec): step 1/1. In terms of biological role, catalyzes the attachment of serine to tRNA(Ser). Is also able to aminoacylate tRNA(Sec) with serine, to form the misacylated tRNA L-seryl-tRNA(Sec), which will be further converted into selenocysteinyl-tRNA(Sec). The polypeptide is Serine--tRNA ligase (Methylorubrum populi (strain ATCC BAA-705 / NCIMB 13946 / BJ001) (Methylobacterium populi)).